Consider the following 406-residue polypeptide: Probable endo-xylogalacturonan hydrolase A (406 aa).

A signal peptide spans 1–18 (MLYYRNLALLSLLSLSSA). PbH1 repeat units lie at residues 183–213 (AKDV…DIGS), 214–235 (STHV…ALKP), 237–257 (CNYV…SVGS), and 299–320 (VKNV…QIQS). Aspartate 228 acts as the Proton donor in catalysis. N-linked (GlcNAc...) asparagine glycosylation occurs at asparagine 244. Histidine 251 is an active-site residue. The N-linked (GlcNAc...) asparagine glycan is linked to asparagine 301.

This sequence belongs to the glycosyl hydrolase 28 family.

Its subcellular location is the secreted. Functionally, pectinolytic enzyme involved in the degradation of xylogalacturonan (xga), a galacturonan backbone heavily substituted with xylose, and which is one important component of the hairy regions of pectin. Activity requires a galacturonic acid backbone substituted with xylose. This Neosartorya fischeri (strain ATCC 1020 / DSM 3700 / CBS 544.65 / FGSC A1164 / JCM 1740 / NRRL 181 / WB 181) (Aspergillus fischerianus) protein is Probable endo-xylogalacturonan hydrolase A (xghA).